The primary structure comprises 576 residues: DNA mismatch repair protein MutL (576 aa).

This sequence belongs to the DNA mismatch repair MutL/HexB family.

This protein is involved in the repair of mismatches in DNA. It is required for dam-dependent methyl-directed DNA mismatch repair. May act as a 'molecular matchmaker', a protein that promotes the formation of a stable complex between two or more DNA-binding proteins in an ATP-dependent manner without itself being part of a final effector complex. This Chlamydia trachomatis serovar A (strain ATCC VR-571B / DSM 19440 / HAR-13) protein is DNA mismatch repair protein MutL.